Consider the following 810-residue polypeptide: Abnormal pharyngeal pumping eat-20 (810 aa).

The first 20 residues, 1-20 (MTTFCRVLLIFGIYVAVCCA), serve as a signal peptide directing secretion. Topologically, residues 21–748 (QSVEDDVFHF…GKQSSAAASW (728 aa)) are extracellular. Residues Asn90, Asn171, and Asn232 are each glycosylated (N-linked (GlcNAc...) asparagine). 3 consecutive EGF-like domains span residues 220-257 (PPSP…DRCE), 258-293 (LDVC…LLCE), and 301-335 (VAPI…ANCN). Intrachain disulfides connect Cys224/Cys235, Cys229/Cys245, Cys247/Cys256, Cys261/Cys272, Cys266/Cys281, Cys283/Cys292, Cys305/Cys314, Cys309/Cys323, and Cys325/Cys334. The N-linked (GlcNAc...) asparagine glycan is linked to Asn371. Residues 522–531 (FAPTTGTQQP) show a composition bias toward low complexity. Disordered stretches follow at residues 522–567 (FAPT…STMQ) and 684–738 (PHPQ…HTSS). Positions 542-558 (DENEEEEEEETTEETEE) are enriched in acidic residues. Residues 749–769 (IIAIIALIVLGLLLLATSLFI) form a helical membrane-spanning segment. Over 770–810 (LRYIRQSRKLHGKYNPAREEHNLSAAYAMPMSHIAKEERLI) the chain is Cytoplasmic.

In terms of tissue distribution, highly expressed in the pharynx, circumpharyngeal cells, pharyngeal-intestinal valve and a subset of neurons in larval and embryonic stages. Also moderately expressed in the lining of the intestine, coelomocytes, labial process bundles and some hypodermal cells. In adults, it is predominantly expressed in the pharynx, the pharyngeal-intenstinal valve, some circumpharyngeal cells, m3, m4 and m6 pharyngeal muscles, and IL1, OLQ, BAG and ALN neurons. Weaker expression is observed in labial process bundles, coelomocytes, the ventral hypodermal ridge, the vulval hypodermis and the sensory rays of the adult male tail.

Its subcellular location is the membrane. In terms of biological role, regulates pharyngeal pumping during feeding. The chain is Abnormal pharyngeal pumping eat-20 (eat-20) from Caenorhabditis elegans.